A 123-amino-acid polypeptide reads, in one-letter code: Small ribosomal subunit protein uS12c (123 aa).

The protein belongs to the universal ribosomal protein uS12 family. In terms of assembly, part of the 30S ribosomal subunit.

It is found in the plastid. Its subcellular location is the chloroplast. With S4 and S5 plays an important role in translational accuracy. Located at the interface of the 30S and 50S subunits. The polypeptide is Small ribosomal subunit protein uS12c (rps12) (Oenothera elata subsp. hookeri (Hooker's evening primrose)).